A 240-amino-acid chain; its full sequence is Probable transcriptional activator (240 aa).

The interval 17–28 (CTSCQARHGVVC) is essential for the oxygen-regulated activity. One can recognise an HTH crp-type domain in the interval 158 to 232 (RTAEEKVASL…FRHIIVPDMD (75 aa)). The H-T-H motif DNA-binding region spans 191–210 (RAEIADFLGLTIETVSRQMT).

In terms of biological role, promotes the microaerobic and symbiotic induction of fixN, possibly by binding to the FNR consensus binding site upstream of fixN. The chain is Probable transcriptional activator (fnrN) from Rhizobium leguminosarum bv. viciae.